Reading from the N-terminus, the 259-residue chain is Phospholipase YtpA (259 aa).

Residue S88 is the Nucleophile of the active site. Residues D206 and H236 each act as charge relay system in the active site.

The protein belongs to the AB hydrolase superfamily.

It participates in antibiotic biosynthesis; bacilysocin biosynthesis. In terms of biological role, phospholipase involved in the biosynthesis of the antibiotic bacilysocin. It probably catalyzes the hydrolysis of the 2-sn-acyl moiety of phosphatidylglycerol to produce bacilysocin (lysophosphatidylglycerol). Is also able to catalyze the hydrolysis reaction of one acyl bond in phosphatidylcholine in vitro (actual cleavage point is unknown), resulting in lysophosphatidylcholine. This is Phospholipase YtpA (ytpA) from Bacillus subtilis (strain 168).